Reading from the N-terminus, the 316-residue chain is Transaldolase (316 aa).

The Schiff-base intermediate with substrate role is filled by K132.

It belongs to the transaldolase family. Type 1 subfamily. In terms of assembly, homodimer.

It is found in the cytoplasm. The enzyme catalyses D-sedoheptulose 7-phosphate + D-glyceraldehyde 3-phosphate = D-erythrose 4-phosphate + beta-D-fructose 6-phosphate. It participates in carbohydrate degradation; pentose phosphate pathway; D-glyceraldehyde 3-phosphate and beta-D-fructose 6-phosphate from D-ribose 5-phosphate and D-xylulose 5-phosphate (non-oxidative stage): step 2/3. Its function is as follows. Transaldolase is important for the balance of metabolites in the pentose-phosphate pathway. In Vibrio vulnificus (strain YJ016), this protein is Transaldolase.